An 817-amino-acid polypeptide reads, in one-letter code: Leucine--tRNA ligase (817 aa).

Positions 42 to 52 (PYPSGKLHMGH) match the 'HIGH' region motif. The short motif at 576-580 (KMSKS) is the 'KMSKS' region element. Lys579 is a binding site for ATP.

Belongs to the class-I aminoacyl-tRNA synthetase family.

Its subcellular location is the cytoplasm. It carries out the reaction tRNA(Leu) + L-leucine + ATP = L-leucyl-tRNA(Leu) + AMP + diphosphate. This is Leucine--tRNA ligase from Methylobacillus flagellatus (strain ATCC 51484 / DSM 6875 / VKM B-1610 / KT).